We begin with the raw amino-acid sequence, 365 residues long: Geissoschizine synthase (365 aa).

Cys51 serves as a coordination point for Zn(2+). Asn52 lines the NADP(+) pocket. His73, Glu74, Cys104, Cys107, Cys110, Cys118, and Cys169 together coordinate Zn(2+). NADP(+)-binding residues include Leu195, Gly197, Leu198, Ser217, Thr218, Ser219, Lys222, Arg262, Val281, Ala283, Ser305, Thr307, and Arg352.

Belongs to the zinc-containing alcohol dehydrogenase family. Class-III subfamily. As to quaternary structure, homodimer. Requires Zn(2+) as cofactor. In terms of tissue distribution, mainly expressed in roots and, to a lower level, in leaves.

The catalysed reaction is (19E)-geissoschizine + NADP(+) = 4,21-dehydrogeissoschizine + NADPH. It participates in alkaloid biosynthesis; ajmaline biosynthesis. Alcohol dehydrogenase involved in the biosynthesis of ajmaline-type monoterpenoid indole alkaloids (MIAs) natural products, important plant-derived pharmaceuticals used in the therapy of heart disorders. Catalyzes iminium reduction on 4,21-dehydrogeissoschizine to produce 19E-geissoschizine, precursor of vomilenine, an intermediate chemical in the biosynthesis of ajmaline. The sequence is that of Geissoschizine synthase from Rauvolfia serpentina (Serpentine wood).